The chain runs to 165 residues: Phosphopantetheine adenylyltransferase (165 aa).

Substrate is bound at residue Ser-10. Residues 10–11 (SF) and His-18 each bind ATP. Lys-42, Ser-79, and Arg-93 together coordinate substrate. ATP is bound by residues 94–96 (GLR), Glu-104, and 129–135 (VRPITAT).

This sequence belongs to the bacterial CoaD family. Homohexamer. Requires Mg(2+) as cofactor.

The protein resides in the cytoplasm. The catalysed reaction is (R)-4'-phosphopantetheine + ATP + H(+) = 3'-dephospho-CoA + diphosphate. Its pathway is cofactor biosynthesis; coenzyme A biosynthesis; CoA from (R)-pantothenate: step 4/5. Reversibly transfers an adenylyl group from ATP to 4'-phosphopantetheine, yielding dephospho-CoA (dPCoA) and pyrophosphate. In Bradyrhizobium diazoefficiens (strain JCM 10833 / BCRC 13528 / IAM 13628 / NBRC 14792 / USDA 110), this protein is Phosphopantetheine adenylyltransferase.